Here is a 79-residue protein sequence, read N- to C-terminus: Beta-hexatoxin-Mg1a (79 aa).

The signal sequence occupies residues 1-20; the sequence is MKAPATTLILVMSLISVLWA. Residues 21-50 constitute a propeptide that is removed on maturation; that stretch reads TPDLEEGDLLAELGDLIATDDEYPMKPEER. Disulfide bonds link Cys52–Cys66, Cys59–Cys71, and Cys65–Cys76.

The protein belongs to the neurotoxin 15 family. 01 (magi-5) subfamily. As to expression, expressed by the venom gland.

Its subcellular location is the secreted. Its function is as follows. Insect and vertebrate active toxin. Binds to site 4 of mammalian voltage-gated sodium channels and shifts the activation voltage of the mammalian Nav1.2a/SCN2A channel to more hyperpolarized voltages, whereas the insect channel, DmNav1 (para), is not affected. Competes for binding at site 3 of the insect sodium channel. Causes temporary paralysis when injected into lepidopteran larvae at 8.6 nmol/g. A low intracranial injection dose into mice causes lacrimation, closure of the eyes and sweating. A high injection dose causes extensive lacrimation and death. The chain is Beta-hexatoxin-Mg1a from Macrothele gigas (Japanese funnel web spider).